A 382-amino-acid chain; its full sequence is Na(+)/H(+) antiporter NhaA (382 aa).

10 consecutive transmembrane segments (helical) span residues 5 to 25, 42 to 62, 88 to 108, 116 to 136, 145 to 165, 169 to 189, 261 to 281, 282 to 302, 327 to 347, and 353 to 373; these read INLL…ALAW, FGGV…FFGI, LATL…NAVI, GWGI…RLVF, FLLL…AVFY, VHPT…AAYI, IVVD…RFSS, VGTA…AGIL, TGLV…VAFV, and GAAK…VALG.

The protein belongs to the NhaA Na(+)/H(+) (TC 2.A.33) antiporter family.

The protein localises to the cell inner membrane. It carries out the reaction Na(+)(in) + 2 H(+)(out) = Na(+)(out) + 2 H(+)(in). Its function is as follows. Na(+)/H(+) antiporter that extrudes sodium in exchange for external protons. This is Na(+)/H(+) antiporter NhaA from Geobacter metallireducens (strain ATCC 53774 / DSM 7210 / GS-15).